Reading from the N-terminus, the 692-residue chain is Elongation factor G (692 aa).

The tr-type G domain occupies 8–282 (EKTRNIGIMA…AVLDYLPAPT (275 aa)). GTP contacts are provided by residues 17 to 24 (AHIDAGKT), 81 to 85 (DTPGH), and 135 to 138 (NKMD). 4 positions are modified to phosphoserine: Ser213, Ser302, Ser569, and Ser680.

Belongs to the TRAFAC class translation factor GTPase superfamily. Classic translation factor GTPase family. EF-G/EF-2 subfamily. Phosphorylated on threonine residue(s). Phosphorylated by PrkC and dephosphorylated by PrpC, in vitro.

The protein localises to the cytoplasm. Its function is as follows. Catalyzes the GTP-dependent ribosomal translocation step during translation elongation. During this step, the ribosome changes from the pre-translocational (PRE) to the post-translocational (POST) state as the newly formed A-site-bound peptidyl-tRNA and P-site-bound deacylated tRNA move to the P and E sites, respectively. Catalyzes the coordinated movement of the two tRNA molecules, the mRNA and conformational changes in the ribosome. The sequence is that of Elongation factor G (fusA) from Bacillus subtilis (strain 168).